The chain runs to 145 residues: Basic leucine zipper 1 (145 aa).

Residues 1 to 11 (MANAEKTSSGS) are compositionally biased toward polar residues. A disordered region spans residues 1–39 (MANAEKTSSGSDIDEKKRKRKLSNRESARRSRLKKQKLM). A bZIP domain is found at 14–77 (DEKKRKRKLS…DSVETENAGL (64 aa)). The tract at residues 16–37 (KKRKRKLSNRESARRSRLKKQK) is basic motif. Residues 46 to 53 (ISSLERRI) form a leucine-zipper region.

The protein belongs to the bZIP family. In terms of assembly, interacts with ZFP7, BZIP4, BZIP9, BZIP10, BZIP11, BZIP25, BZIP42, BZIP44, BZIP53, BZIP58 and BZIP63. Expressed in both shoots, including young leaves, stipulae and trichomes (except in cotyledons and hypocotyl), and roots, including vascular tissues (e.g. in both the phloem and the xylem). Present in seeds and pollen. Restricted to vasculatures and roots in the presence of sucrose or glucose.

The protein resides in the nucleus. Functionally, transcription factor that binds to the C-box-like motif (5'-TGCTGACGTCA-3') and G-box-like motif (5'-CCACGTGGCC-3'), ABRE elements, of gene promoters involved in sugar signaling. Activated by low energy stress both at transcriptional and post-transcriptional mechanisms. Promotes dark-induced senescence and participates in the transcriptional reprogramming of amino acid metabolism during the dark-induced starvation response. Transcription activator of the mannan synthase CSLA9. Recognizes and binds to DNA-specific sequence of CSLA9 promoter. The polypeptide is Basic leucine zipper 1 (BZIP1) (Arabidopsis thaliana (Mouse-ear cress)).